Consider the following 424-residue polypeptide: Dual-specificity RNA methyltransferase RlmN (424 aa).

Glu-132 acts as the Proton acceptor in catalysis. A Radical SAM core domain is found at 138–388 (GPDRGTLCVS…VRTPRGRDIL (251 aa)). Cys-145 and Cys-391 are joined by a disulfide. [4Fe-4S] cluster-binding residues include Cys-152, Cys-156, and Cys-159. S-adenosyl-L-methionine-binding positions include 217–218 (GE), Ser-249, 271–273 (SLH), and Asn-348. Cys-391 functions as the S-methylcysteine intermediate in the catalytic mechanism.

The protein belongs to the radical SAM superfamily. RlmN family. Requires [4Fe-4S] cluster as cofactor.

It localises to the cytoplasm. The catalysed reaction is adenosine(2503) in 23S rRNA + 2 reduced [2Fe-2S]-[ferredoxin] + 2 S-adenosyl-L-methionine = 2-methyladenosine(2503) in 23S rRNA + 5'-deoxyadenosine + L-methionine + 2 oxidized [2Fe-2S]-[ferredoxin] + S-adenosyl-L-homocysteine. The enzyme catalyses adenosine(37) in tRNA + 2 reduced [2Fe-2S]-[ferredoxin] + 2 S-adenosyl-L-methionine = 2-methyladenosine(37) in tRNA + 5'-deoxyadenosine + L-methionine + 2 oxidized [2Fe-2S]-[ferredoxin] + S-adenosyl-L-homocysteine. Its function is as follows. Specifically methylates position 2 of adenine 2503 in 23S rRNA and position 2 of adenine 37 in tRNAs. m2A2503 modification seems to play a crucial role in the proofreading step occurring at the peptidyl transferase center and thus would serve to optimize ribosomal fidelity. This is Dual-specificity RNA methyltransferase RlmN from Methylobacterium radiotolerans (strain ATCC 27329 / DSM 1819 / JCM 2831 / NBRC 15690 / NCIMB 10815 / 0-1).